Here is a 357-residue protein sequence, read N- to C-terminus: MEGSSSAIARKTWELENNILPVEPTDSASDSIFHYDDASQAKIQQEKPWASDPNYFKRVHISALALLKMVVHARSGGTIEIMGLMQGKTEGDTIIVMDAFALPVEGTETRVNAQSDAYEYMVEYSQTSKLAGRLENVVGWYHSHPGYGCWLSGIDVSTQMLNQQYQEPFLAVVIDPTRTVSAGKVEIGAFRTYPEGHKISDDHVSEYQTIPLNKIEDFGVHCKQYYSLDITYFKSSLDSHLLDLLWNKYWVNTLSSSPLLGNGDYVAGQISDLAEKLEQAESQLANSRYGGIAPAGHQRRKEDEPQLAKITRDSAKITVEQVHGLMSQVIKDILFNSARQSKKSADDSSDPEPMITS.

The residue at position 1 (Met1) is an N-acetylmethionine. The MPN domain occupies 59 to 196; the sequence is VHISALALLK…IGAFRTYPEG (138 aa). Positions 142, 144, and 155 each coordinate Zn(2+). A JAMM motif motif is present at residues 142-155; sequence HSHPGYGCWLSGID. A disordered region spans residues 338 to 357; it reads ARQSKKSADDSSDPEPMITS.

This sequence belongs to the peptidase M67A family. CSN5 subfamily. In terms of assembly, component of the CSN complex, probably composed of CSN1, CSN2, CSN3, CSN4, CSN5 (CSN5A or CSN5B), CSN6 (CSN6A or CSN6B), CSN7 and CSN8. CSN5A or CSN5B are present within distinct CSN complexes each containing only one copy of CSN5. Interacts with itself. In the complex, it is located in the center and probably interacts directly with CSN4 and CSN6A or CSN6B. Present also in subcomplex forms which inculdes CSN3. Also exists as monomeric form. Interacts with CYT1 in vitro, but not in planta. A divalent metal cation serves as cofactor. Ubiquitously expressed. Highly expressed in flowers and roots. Expressed at lower level in seedlings and siliques.

The protein localises to the cytoplasm. Its subcellular location is the nucleus. Functionally, probable protease subunit of the COP9 signalosome complex (CSN), a complex involved in various cellular and developmental processes such as photomorphogenesis and auxin and jasmonate responses. The CSN complex is an essential regulator of the ubiquitin (Ubl) conjugation pathway by mediating the deneddylation of the cullin subunits of the SCF-type E3 ligase complexes, leading to decrease the Ubl ligase activity of SCF. In the complex, it probably acts as the catalytic center that mediates the cleavage of Nedd8 from cullins. It however has no metalloprotease activity by itself and requires the other subunits of the CSN complex. The CSN complex is involved in repression of photomorphogenesis in darkness by regulating the activity of COP1-containing Ubl ligase complexes. The complex is also required for degradation of PSIAA6 by regulating the activity of the Ubl ligase SCF-TIR complex. Involved in CSN's deneddylation/derubylation activity. Required for the deneddylation of all cullins. Essential for the structural integrity of the CSN holocomplex. The sequence is that of COP9 signalosome complex subunit 5a from Arabidopsis thaliana (Mouse-ear cress).